We begin with the raw amino-acid sequence, 586 residues long: Glutathione hydrolase 5 proenzyme (586 aa).

Topologically, residues 1 to 8 (MARGYGAT) are cytoplasmic. The chain crosses the membrane as a helical; Signal-anchor for type II membrane protein span at residues 9-29 (VSLVLLGLGLALAVIVLAVVL). Residues 30 to 586 (SRHQAPCGPQ…LRKSGEAAGY (557 aa)) are Extracellular-facing. A glycan (N-linked (GlcNAc...) asparagine) is linked at Asn-98. L-glutamate is bound at residue Arg-110. N-linked (GlcNAc...) asparagine glycans are attached at residues Asn-204, Asn-303, and Asn-347. The active-site Nucleophile is Thr-388. L-glutamate is bound by residues Thr-406, Glu-427, and 469–470 (SS). N-linked (GlcNAc...) asparagine glycans are attached at residues Asn-535 and Asn-550.

It belongs to the gamma-glutamyltransferase family. As to quaternary structure, heterodimer composed of the light and heavy chains. The active site is located in the light chain. Cleaved by autocatalysis into a large and a small subunit. Post-translationally, glycosylated. As to expression, expressed in follicular dendritic cells in lymphoid follicles (at protein level).

Its subcellular location is the membrane. It catalyses the reaction glutathione + H2O = L-cysteinylglycine + L-glutamate. The enzyme catalyses an S-substituted glutathione + H2O = an S-substituted L-cysteinylglycine + L-glutamate. The catalysed reaction is leukotriene C4 + H2O = leukotriene D4 + L-glutamate. It carries out the reaction S-[(2E,6E,10E)-geranylgeranyl]-L-glutathione + H2O = S-[(2E,6E,10E)-geranylgeranyl]-L-cysteinylglycine + L-glutamate. It catalyses the reaction an N-terminal (5-L-glutamyl)-[peptide] + an alpha-amino acid = 5-L-glutamyl amino acid + an N-terminal L-alpha-aminoacyl-[peptide]. It participates in sulfur metabolism; glutathione metabolism. The protein operates within lipid metabolism; leukotriene D4 biosynthesis. Inhibited by serine-borate. Functionally, cleaves the gamma-glutamyl bond of extracellular glutathione tripeptide (gamma-Glu-Cys-Gly) and certain glutathione conjugates. Hydrolyzes glutathione releasing L-Glu and Cys-Gly dipeptide which is further metabolized to maintain extracellular cysteine levels but also to provide cysteine necessary for intracellular glutathione synthesis. Among glutathione-S-conjugates metabolizes leukotriene C4 (LTC4) and S-geranylgeranyl-glutathione (GGG), but is inactive toward gamma-glutamyl leucine. Converts extracellular LTC4 to LTD4 during acute inflammatory response. Acts as a negative regulator of GGG bioactivity. GGT5 (via GGG catabolism) and ABCC1 (via extracellular transport) establish GGG gradients within lymphoid tissues to position P2RY8-positive lymphocytes at germinal centers in lymphoid follicles and restrict their chemotactic transmigration from blood vessels to bone marrow parenchyma. The transpeptidation reaction, i.e. the transfer of gamma-glutamyl moiety to an acceptor molecule to yield a new gamma-glutamyl compound requires high concentration of dipeptide acceptor and is considered nonphysiological. This chain is Glutathione hydrolase 5 proenzyme (GGT5), found in Homo sapiens (Human).